Consider the following 1475-residue polypeptide: Sex-determining transformer protein 2 (1475 aa).

A signal peptide spans M1 to S31. 11 helical membrane passes run T446–W466, A474–T494, G496–L516, W589–S609, G737–I757, A902–F922, A928–I948, F952–F972, I979–L999, I1034–I1054, and I1060–I1080. The tract at residues E1133–S1273 is interaction with fem-3. Disordered stretches follow at residues P1142–T1194 and N1267–P1330. A compositionally biased stretch (basic residues) spans R1178–R1188. The span at Q1276–D1310 shows a compositional bias: basic and acidic residues. The segment at C1392 to R1413 is MX regulatory domain; required for tra-1 binding. Positions T1424–V1475 are disordered. The span at L1451–D1469 shows a compositional bias: basic and acidic residues.

Interacts with tra-1 and fem-3. Post-translationally, undergoes cleavage by tra-3 to produce a feminizing carboxy-terminal isoform Tra-2B. Somatic and germline tissues. Isoform Tra-2B is specific to oocytes.

The protein resides in the membrane. Its function is as follows. Plays a major role in controlling sexual cell fates. Promotes female development in XX animals where it sequesters one or more of the FEM proteins to the membrane thereby freeing the tra-1 protein (a putative transcription factor) to enter the nucleus and promote female development. In XO animals it acts as a receptor for her-1 which prevents it from binding to FEM proteins thereby repressing the activity of tra-1. Negatively regulates male development when bound to fem-3 and is required together with tra-1 for promoting spermatogenesis. Also required for feminizing tra-3 activity. The protein is Sex-determining transformer protein 2 (tra-2) of Caenorhabditis elegans.